Reading from the N-terminus, the 571-residue chain is DNA primase (571 aa).

Residues 20 to 44 (CPFHKEKTPSFQVDTEKGYYHCFGC) form a CHC2-type zinc finger. Residues 229 to 309 (AELVVVEGYM…KFRVRATSVP (81 aa)) form the Toprim domain. E235, D280, and D282 together coordinate Mg(2+).

Belongs to the DnaG primase family. Monomer. Interacts with DnaB. Zn(2+) is required as a cofactor. Requires Mg(2+) as cofactor.

The catalysed reaction is ssDNA + n NTP = ssDNA/pppN(pN)n-1 hybrid + (n-1) diphosphate.. Its function is as follows. RNA polymerase that catalyzes the synthesis of short RNA molecules used as primers for DNA polymerase during DNA replication. This Deinococcus radiodurans (strain ATCC 13939 / DSM 20539 / JCM 16871 / CCUG 27074 / LMG 4051 / NBRC 15346 / NCIMB 9279 / VKM B-1422 / R1) protein is DNA primase.